The chain runs to 881 residues: Phosphoenolpyruvate carboxylase (881 aa).

Residues H139 and K544 contribute to the active site.

It belongs to the PEPCase type 1 family. Mg(2+) serves as cofactor.

The catalysed reaction is oxaloacetate + phosphate = phosphoenolpyruvate + hydrogencarbonate. Its function is as follows. Forms oxaloacetate, a four-carbon dicarboxylic acid source for the tricarboxylic acid cycle. This Marinobacter nauticus (strain ATCC 700491 / DSM 11845 / VT8) (Marinobacter aquaeolei) protein is Phosphoenolpyruvate carboxylase.